The chain runs to 208 residues: Glutathione S-transferase 2 (208 aa).

In terms of domain architecture, GST N-terminal spans 1–78 (MSYKLTYFSI…HLARKYNLNG (78 aa)). Glutathione-binding positions include Y7, K42, 49–50 (QL), and 62–63 (QS). Positions 80 to 200 (NEMETTYIDM…YCEKRDAAKV (121 aa)) constitute a GST C-terminal domain.

This sequence belongs to the GST superfamily. Pi family. As to quaternary structure, homodimer. As to expression, hypodermis, wall of the seminal receptacle and spermatozoa of adult worms.

The enzyme catalyses RX + glutathione = an S-substituted glutathione + a halide anion + H(+). Appears to play a central role in the parasite detoxification system. In Onchocerca volvulus, this protein is Glutathione S-transferase 2 (GST2).